Reading from the N-terminus, the 919-residue chain is TRPM8 channel-associated factor 2 (919 aa).

The Peptidase M60 domain maps to 542 to 841 (DCWVSTGLYL…TYLQLQEAFG (300 aa)).

Belongs to the TCAF family. Isoform 2 interacts with TRPM8 (via N-terminus and C-terminus domains); the interaction inhibits TRPM8 channel activity. Interacts with TRPV6. Isoform 2 is expressed in the prostate and in cancerous prostate samples.

The protein localises to the cell membrane. Functionally, negatively regulates the plasma membrane cation channel TRPM8 activity. Involved in the recruitment of TRPM8 to the cell surface. Promotes prostate cancer cell migration stimulation in a TRPM8-dependent manner. This is TRPM8 channel-associated factor 2 from Homo sapiens (Human).